Consider the following 163-residue polypeptide: Low molecular weight protein-tyrosine phosphatase A (163 aa).

Cys11 acts as the Nucleophile in catalysis. The active site involves Arg17. The Proton donor role is filled by Asp126.

It belongs to the low molecular weight phosphotyrosine protein phosphatase family.

It catalyses the reaction O-phospho-L-tyrosyl-[protein] + H2O = L-tyrosyl-[protein] + phosphate. In terms of biological role, key virulence factor required for mycobacterial survival within host macrophages. Exhibits protein tyrosine phosphatase activity. Functionally, supports mycobacteria survival during infection by modulation of the phagosome maturation and modulation of the normal host signaling pathways, including host innate immune responses and cell apoptosis. The polypeptide is Low molecular weight protein-tyrosine phosphatase A (ptpA) (Mycobacterium bovis (strain ATCC BAA-935 / AF2122/97)).